The chain runs to 386 residues: Phosphoglycerate kinase (386 aa).

Residues 21–23 (DLN), Arg-36, 59–62 (HLGR), Arg-112, and Arg-145 contribute to the substrate site. ATP is bound by residues Lys-196, Glu-313, and 339 to 342 (GGDT).

Belongs to the phosphoglycerate kinase family. As to quaternary structure, monomer.

The protein resides in the cytoplasm. The enzyme catalyses (2R)-3-phosphoglycerate + ATP = (2R)-3-phospho-glyceroyl phosphate + ADP. Its pathway is carbohydrate degradation; glycolysis; pyruvate from D-glyceraldehyde 3-phosphate: step 2/5. The polypeptide is Phosphoglycerate kinase (Haemophilus influenzae (strain PittGG)).